The following is a 211-amino-acid chain: ATP phosphoribosyltransferase (211 aa).

It belongs to the ATP phosphoribosyltransferase family. Short subfamily. In terms of assembly, heteromultimer composed of HisG and HisZ subunits.

Its subcellular location is the cytoplasm. The enzyme catalyses 1-(5-phospho-beta-D-ribosyl)-ATP + diphosphate = 5-phospho-alpha-D-ribose 1-diphosphate + ATP. It participates in amino-acid biosynthesis; L-histidine biosynthesis; L-histidine from 5-phospho-alpha-D-ribose 1-diphosphate: step 1/9. Its function is as follows. Catalyzes the condensation of ATP and 5-phosphoribose 1-diphosphate to form N'-(5'-phosphoribosyl)-ATP (PR-ATP). Has a crucial role in the pathway because the rate of histidine biosynthesis seems to be controlled primarily by regulation of HisG enzymatic activity. The protein is ATP phosphoribosyltransferase of Pseudomonas entomophila (strain L48).